A 47-amino-acid polypeptide reads, in one-letter code: Lysis protein for colicin E8 (47 aa).

A signal peptide spans 1–19 (MKKITGIILLLLAVIILAA). Cys20 carries N-palmitoyl cysteine lipidation. A lipid anchor (S-diacylglycerol cysteine) is attached at Cys20.

Its subcellular location is the cell outer membrane. Lysis proteins are required for both colicin release and partial cell lysis. This chain is Lysis protein for colicin E8 (lys), found in Escherichia coli.